Reading from the N-terminus, the 388-residue chain is MIVAGARTPVGKLMGSLKDFSGTDLGAIAIRAALEKANVPASMVEYVIMGQVLTAGAGQMPARQAAVAAGIPWDVAALSINKMCLSGIDAIALADQLIRAGEFDVIVAGGQESMSQAPHLLPKSREGYKYGDATLVDHLAYDGLHDVFTDQPMGALTEQRNDVDKFTRAEQDEYAAQSHQKAAAAWKDGVFADEVVPVSIPQRKGDPIEFAEDEGIRANTTAESLAGLKPAFRKDGTITAGSASQISDGAAAVIVMNKAKAEELGLTWLAEIGAHGVVAGPDSTLQSQPANAIKKAITREGITVDQLDVIEINEAFAAVALASTKELGVDPAKVNVNGGAIAIGHPIGMSGARIALHAALELARRGSGYAVAALCGAGGQGDALVLRR.

The Acyl-thioester intermediate role is filled by cysteine 84. Lysine 187 participates in a covalent cross-link: Isoglutamyl lysine isopeptide (Lys-Gln) (interchain with Q-Cter in protein Pup). Residues histidine 345 and cysteine 375 each act as proton acceptor in the active site.

This sequence belongs to the thiolase-like superfamily. Thiolase family.

The enzyme catalyses 2 acetyl-CoA = acetoacetyl-CoA + CoA. This Mycolicibacterium smegmatis (strain ATCC 700084 / mc(2)155) (Mycobacterium smegmatis) protein is Probable acetyl-CoA acetyltransferase.